The chain runs to 119 residues: Large ribosomal subunit protein uL18 (119 aa).

The protein belongs to the universal ribosomal protein uL18 family. Part of the 50S ribosomal subunit; part of the 5S rRNA/L5/L18/L25 subcomplex. Contacts the 5S and 23S rRNAs.

In terms of biological role, this is one of the proteins that bind and probably mediate the attachment of the 5S RNA into the large ribosomal subunit, where it forms part of the central protuberance. This is Large ribosomal subunit protein uL18 from Clostridium perfringens (strain 13 / Type A).